A 360-amino-acid polypeptide reads, in one-letter code: Phospho-N-acetylmuramoyl-pentapeptide-transferase (360 aa).

The next 10 helical transmembrane spans lie at 21–41 (YLSF…LWMG), 73–93 (TMGG…WADL), 94–114 (SNPY…VGFV), 132–152 (WKYF…YAHG), 168–188 (VMPQ…VGTS), 199–219 (GLAI…AWAT), 239–259 (LVVV…FNTY), 263–283 (VFMG…IAVL), 288–308 (LVLV…ILQV), and 338–358 (VIVR…ATLK).

The protein belongs to the glycosyltransferase 4 family. MraY subfamily. It depends on Mg(2+) as a cofactor.

It localises to the cell inner membrane. It catalyses the reaction UDP-N-acetyl-alpha-D-muramoyl-L-alanyl-gamma-D-glutamyl-meso-2,6-diaminopimeloyl-D-alanyl-D-alanine + di-trans,octa-cis-undecaprenyl phosphate = di-trans,octa-cis-undecaprenyl diphospho-N-acetyl-alpha-D-muramoyl-L-alanyl-D-glutamyl-meso-2,6-diaminopimeloyl-D-alanyl-D-alanine + UMP. It functions in the pathway cell wall biogenesis; peptidoglycan biosynthesis. Catalyzes the initial step of the lipid cycle reactions in the biosynthesis of the cell wall peptidoglycan: transfers peptidoglycan precursor phospho-MurNAc-pentapeptide from UDP-MurNAc-pentapeptide onto the lipid carrier undecaprenyl phosphate, yielding undecaprenyl-pyrophosphoryl-MurNAc-pentapeptide, known as lipid I. This Vibrio atlanticus (strain LGP32) (Vibrio splendidus (strain Mel32)) protein is Phospho-N-acetylmuramoyl-pentapeptide-transferase.